The sequence spans 379 residues: Cytochrome b (379 aa).

4 helical membrane-spanning segments follow: residues 33 to 53 (FGSL…FLAM), 77 to 98 (WLIR…FIHV), 113 to 133 (WNIG…GYVL), and 178 to 198 (FFAF…VHLL). H83 and H97 together coordinate heme b. H182 and H196 together coordinate heme b. H201 is a binding site for a ubiquinone. 4 helical membrane-spanning segments follow: residues 226 to 246 (TKDL…TLFF), 288 to 308 (LGGV…PLLN), 320 to 340 (ITQT…WIGG), and 347 to 367 (FTTI…ILIP).

The protein belongs to the cytochrome b family. The cytochrome bc1 complex contains 11 subunits: 3 respiratory subunits (MT-CYB, CYC1 and UQCRFS1), 2 core proteins (UQCRC1 and UQCRC2) and 6 low-molecular weight proteins (UQCRH/QCR6, UQCRB/QCR7, UQCRQ/QCR8, UQCR10/QCR9, UQCR11/QCR10 and a cleavage product of UQCRFS1). This cytochrome bc1 complex then forms a dimer. Heme b serves as cofactor.

The protein localises to the mitochondrion inner membrane. Functionally, component of the ubiquinol-cytochrome c reductase complex (complex III or cytochrome b-c1 complex) that is part of the mitochondrial respiratory chain. The b-c1 complex mediates electron transfer from ubiquinol to cytochrome c. Contributes to the generation of a proton gradient across the mitochondrial membrane that is then used for ATP synthesis. The polypeptide is Cytochrome b (MT-CYB) (Akodon azarae (Azara's grass mouse)).